We begin with the raw amino-acid sequence, 47 residues long: Large ribosomal subunit protein bL34 (47 aa).

Belongs to the bacterial ribosomal protein bL34 family.

This chain is Large ribosomal subunit protein bL34, found in Rhodococcus opacus (strain B4).